The sequence spans 234 residues: tRNA1(Val) (adenine(37)-N6)-methyltransferase (234 aa).

It belongs to the methyltransferase superfamily. tRNA (adenine-N(6)-)-methyltransferase family.

It is found in the cytoplasm. The enzyme catalyses adenosine(37) in tRNA1(Val) + S-adenosyl-L-methionine = N(6)-methyladenosine(37) in tRNA1(Val) + S-adenosyl-L-homocysteine + H(+). Its function is as follows. Specifically methylates the adenine in position 37 of tRNA(1)(Val) (anticodon cmo5UAC). This chain is tRNA1(Val) (adenine(37)-N6)-methyltransferase, found in Flavobacterium psychrophilum (strain ATCC 49511 / DSM 21280 / CIP 103535 / JIP02/86).